The sequence spans 270 residues: 5-amino-6-(5-phospho-D-ribitylamino)uracil phosphatase YitU (270 aa).

Asp11 serves as the catalytic Nucleophile. Asp11 is a binding site for Mg(2+). Residue Leu12 participates in phosphate binding. Residue Asp13 participates in Mg(2+) binding. Residues 45–46 (TG) and Lys197 each bind phosphate. Asp220 contributes to the Mg(2+) binding site. Asn223 serves as a coordination point for phosphate.

It belongs to the HAD-like hydrolase superfamily. Cof family. It depends on Mg(2+) as a cofactor.

It catalyses the reaction 5-amino-6-(5-phospho-D-ribitylamino)uracil + H2O = 5-amino-6-(D-ribitylamino)uracil + phosphate. It participates in cofactor biosynthesis; riboflavin biosynthesis; 5-amino-6-(D-ribitylamino)uracil from GTP: step 4/4. Catalyzes the dephosphorylation of the riboflavin precursor 5-amino-6-(5-phospho-D-ribitylamino)uracil and of flavin mononucleotide (FMN) in vitro. This is 5-amino-6-(5-phospho-D-ribitylamino)uracil phosphatase YitU (yitU) from Bacillus subtilis (strain 168).